Reading from the N-terminus, the 159-residue chain is SsrA-binding protein (159 aa).

The segment covering 131–148 (YDKRQTLREKQDRREAER) has biased composition (basic and acidic residues). The segment at 131-159 (YDKRQTLREKQDRREAERTISAIKRKQRA) is disordered.

This sequence belongs to the SmpB family.

It is found in the cytoplasm. In terms of biological role, required for rescue of stalled ribosomes mediated by trans-translation. Binds to transfer-messenger RNA (tmRNA), required for stable association of tmRNA with ribosomes. tmRNA and SmpB together mimic tRNA shape, replacing the anticodon stem-loop with SmpB. tmRNA is encoded by the ssrA gene; the 2 termini fold to resemble tRNA(Ala) and it encodes a 'tag peptide', a short internal open reading frame. During trans-translation Ala-aminoacylated tmRNA acts like a tRNA, entering the A-site of stalled ribosomes, displacing the stalled mRNA. The ribosome then switches to translate the ORF on the tmRNA; the nascent peptide is terminated with the 'tag peptide' encoded by the tmRNA and targeted for degradation. The ribosome is freed to recommence translation, which seems to be the essential function of trans-translation. In Streptomyces coelicolor (strain ATCC BAA-471 / A3(2) / M145), this protein is SsrA-binding protein.